A 505-amino-acid polypeptide reads, in one-letter code: ATP synthase subunit alpha, cyanelle (505 aa).

Residue 170–177 (GDRQTGKT) coordinates ATP.

This sequence belongs to the ATPase alpha/beta chains family. In terms of assembly, F-type ATPases have 2 components, CF(1) - the catalytic core - and CF(0) - the membrane proton channel. CF(1) has five subunits: alpha(3), beta(3), gamma(1), delta(1), epsilon(1). CF(0) has four main subunits: a, b, b' and c.

Its subcellular location is the plastid. The protein resides in the cyanelle thylakoid membrane. It carries out the reaction ATP + H2O + 4 H(+)(in) = ADP + phosphate + 5 H(+)(out). Functionally, produces ATP from ADP in the presence of a proton gradient across the membrane. The alpha chain is a regulatory subunit. The polypeptide is ATP synthase subunit alpha, cyanelle (Cyanophora paradoxa).